The sequence spans 431 residues: Serine--tRNA ligase (431 aa).

236–238 (TAE) lines the L-serine pocket. 267–269 (RSE) contacts ATP. Glu290 lines the L-serine pocket. An ATP-binding site is contributed by 354 to 357 (EISS). Ser389 serves as a coordination point for L-serine.

It belongs to the class-II aminoacyl-tRNA synthetase family. Type-1 seryl-tRNA synthetase subfamily. Homodimer. The tRNA molecule binds across the dimer.

The protein resides in the cytoplasm. It carries out the reaction tRNA(Ser) + L-serine + ATP = L-seryl-tRNA(Ser) + AMP + diphosphate + H(+). It catalyses the reaction tRNA(Sec) + L-serine + ATP = L-seryl-tRNA(Sec) + AMP + diphosphate + H(+). The protein operates within aminoacyl-tRNA biosynthesis; selenocysteinyl-tRNA(Sec) biosynthesis; L-seryl-tRNA(Sec) from L-serine and tRNA(Sec): step 1/1. In terms of biological role, catalyzes the attachment of serine to tRNA(Ser). Is also able to aminoacylate tRNA(Sec) with serine, to form the misacylated tRNA L-seryl-tRNA(Sec), which will be further converted into selenocysteinyl-tRNA(Sec). The polypeptide is Serine--tRNA ligase (Janthinobacterium sp. (strain Marseille) (Minibacterium massiliensis)).